Reading from the N-terminus, the 137-residue chain is Fructose-bisphosphate aldolase C (137 aa).

The active-site Schiff-base intermediate with dihydroxyacetone-P is the Lys3.

It belongs to the class I fructose-bisphosphate aldolase family. Homotetramer.

It carries out the reaction beta-D-fructose 1,6-bisphosphate = D-glyceraldehyde 3-phosphate + dihydroxyacetone phosphate. Its pathway is carbohydrate degradation; glycolysis; D-glyceraldehyde 3-phosphate and glycerone phosphate from D-glucose: step 4/4. The chain is Fructose-bisphosphate aldolase C (ALDOC) from Gallus gallus (Chicken).